A 509-amino-acid chain; its full sequence is Movement protein (509 aa).

The protein localises to the host cell junction. It localises to the host plasmodesma. It is found in the host cytoplasm. In terms of biological role, transports viral genome to neighboring plant cells directly through plasmosdesmata, without any budding. The movement protein allows efficient cell to cell propagation, by bypassing the host cell wall barrier. Increases virus accumulation and symptom severity. This Rice dwarf virus (isolate Akita) (RDV) protein is Movement protein.